Consider the following 533-residue polypeptide: Sterol 26-hydroxylase, mitochondrial (533 aa).

The transit peptide at 1 to 32 directs the protein to the mitochondrion; it reads MAVLSRMRLRWALLDTRVMGHGLCPQGARAKA. A disordered region spans residues 38-58; sequence LRDHESTEGPGTGQDRPRLRS. Lys142 and Lys375 each carry N6-acetyllysine. Positions 386–400 are sterol-binding; sequence PLLKAVIKETLRLYP. Cys479 provides a ligand contact to heme. 2 positions are modified to N6-acetyllysine: Lys512 and Lys523.

The protein belongs to the cytochrome P450 family. Interacts with HSP70; this interaction is required for initial targeting to mitochondria. It depends on heme as a cofactor. As to expression, expressed in liver, kidney and ovary.

The protein resides in the mitochondrion inner membrane. It carries out the reaction 5beta-cholestane-3alpha,7alpha,12alpha-triol + 6 reduced [adrenodoxin] + 3 O2 + 5 H(+) = (25R)-3alpha,7alpha,12alpha-trihydroxy-5beta-cholestan-26-oate + 6 oxidized [adrenodoxin] + 4 H2O. It catalyses the reaction cholestanol + 2 reduced [adrenodoxin] + O2 + 2 H(+) = (25R)-26-hydroxycholestanol + 2 oxidized [adrenodoxin] + H2O. The enzyme catalyses (25R)-3beta-hydroxycholest-5-en-7-one-26-al + 2 reduced [adrenodoxin] + O2 + H(+) = (25R)-3beta-hydroxycholest-5-en-7-one-26-oate + 2 oxidized [adrenodoxin] + H2O. The catalysed reaction is (25R)-3beta,26-dihydroxycholest-5-en-7-one + 2 reduced [adrenodoxin] + O2 + 2 H(+) = (25R)-3beta-hydroxycholest-5-en-7-one-26-al + 2 oxidized [adrenodoxin] + 2 H2O. It carries out the reaction 7-oxocholesterol + 2 reduced [adrenodoxin] + O2 + 2 H(+) = (25R)-3beta,26-dihydroxycholest-5-en-7-one + 2 oxidized [adrenodoxin] + H2O. It catalyses the reaction calciol + 2 reduced [adrenodoxin] + O2 + 2 H(+) = calcidiol + 2 oxidized [adrenodoxin] + H2O. The enzyme catalyses (25R)-5beta-cholestane-3alpha,7alpha,12alpha,26-tetrol + 2 reduced [adrenodoxin] + O2 + 2 H(+) = (25R)-3alpha,7alpha,12alpha-trihydroxy-5beta-cholestan-26-al + 2 oxidized [adrenodoxin] + 2 H2O. The catalysed reaction is 2 reduced [adrenodoxin] + cholesterol + O2 + 2 H(+) = (25R)-cholest-5-ene-3beta,26-diol + 2 oxidized [adrenodoxin] + H2O. It carries out the reaction (25R)-3beta,4beta-dihydroxycholest-5-en-26-al + 2 reduced [adrenodoxin] + O2 + H(+) = (25R)-3beta,4beta-dihydroxycholest-5-en-26-oate + 2 oxidized [adrenodoxin] + H2O. It catalyses the reaction (25R)-4beta,26-dihydroxycholesterol + 2 reduced [adrenodoxin] + O2 + 2 H(+) = (25R)-3beta,4beta-dihydroxycholest-5-en-26-al + 2 oxidized [adrenodoxin] + 2 H2O. The enzyme catalyses 4beta-hydroxycholesterol + 2 reduced [adrenodoxin] + O2 + 2 H(+) = (25R)-4beta,26-dihydroxycholesterol + 2 oxidized [adrenodoxin] + H2O. The catalysed reaction is (25R)-3beta-hydroxy-5-cholesten-26-al + 2 reduced [adrenodoxin] + O2 + H(+) = (25R)-3beta-hydroxy-5-cholestenoate + 2 oxidized [adrenodoxin] + H2O. It carries out the reaction (25R)-cholest-5-ene-3beta,26-diol + 2 reduced [adrenodoxin] + O2 + 2 H(+) = (25R)-3beta-hydroxy-5-cholesten-26-al + 2 oxidized [adrenodoxin] + 2 H2O. It catalyses the reaction (25R)-3alpha,7alpha,12alpha-trihydroxy-5beta-cholestan-26-al + 2 reduced [adrenodoxin] + O2 + H(+) = (25R)-3alpha,7alpha,12alpha-trihydroxy-5beta-cholestan-26-oate + 2 oxidized [adrenodoxin] + H2O. The enzyme catalyses 5beta-cholestane-3alpha,7alpha,12alpha-triol + 2 reduced [adrenodoxin] + O2 + 2 H(+) = (25R)-5beta-cholestane-3alpha,7alpha,12alpha,26-tetrol + 2 oxidized [adrenodoxin] + H2O. Its pathway is hormone biosynthesis; cholecalciferol biosynthesis. The protein operates within steroid metabolism; cholesterol degradation. It functions in the pathway lipid metabolism; bile acid biosynthesis. In terms of biological role, cytochrome P450 monooxygenase that catalyzes regio- and stereospecific hydroxylation of cholesterol and its derivatives. Hydroxylates (with R stereochemistry) the terminal methyl group of cholesterol side-chain in a three step reaction to yield at first a C26 alcohol, then a C26 aldehyde and finally a C26 acid. Regulates cholesterol homeostasis by catalyzing the conversion of excess cholesterol to bile acids via both the 'neutral' (classic) and the 'acid' (alternative) pathways. May also regulate cholesterol homeostasis via generation of active oxysterols, which act as ligands for NR1H2 and NR1H3 nuclear receptors, modulating the transcription of genes involved in lipid metabolism. Plays a role in cholestanol metabolism in the cerebellum. Similarly to cholesterol, hydroxylates cholestanol and may facilitate sterol diffusion through the blood-brain barrier to the systemic circulation for further degradation. Also hydroxylates retinal 7-ketocholesterol, a noxious oxysterol with pro-inflammatory and pro-apoptotic effects, and may play a role in its elimination from the retinal pigment epithelium. May play a redundant role in vitamin D biosynthesis. Catalyzes 25-hydroxylation of vitamin D3 that is required for its conversion to a functionally active form. This chain is Sterol 26-hydroxylase, mitochondrial (Cyp27a1), found in Rattus norvegicus (Rat).